The sequence spans 419 residues: Peptide chain release factor subunit 1 (419 aa).

This sequence belongs to the eukaryotic release factor 1 family. As to quaternary structure, heterodimer of two subunits, one of which binds GTP.

It localises to the cytoplasm. In terms of biological role, directs the termination of nascent peptide synthesis (translation) in response to the termination codons UAA, UAG and UGA. The chain is Peptide chain release factor subunit 1 from Methanococcus maripaludis (strain DSM 14266 / JCM 13030 / NBRC 101832 / S2 / LL).